A 409-amino-acid chain; its full sequence is Elongation factor Tu, cyanelle (409 aa).

Positions 10-214 (KPHVNIGTIG…AVDEYIPTPE (205 aa)) constitute a tr-type G domain. Positions 19–26 (GHVDHGKT) are G1. 19-26 (GHVDHGKT) is a GTP binding site. Thr26 serves as a coordination point for Mg(2+). Positions 60–64 (GITIN) are G2. The G3 stretch occupies residues 81–84 (DCPG). GTP-binding positions include 81–85 (DCPGH) and 136–139 (NKED). A G4 region spans residues 136-139 (NKED). The interval 174 to 176 (SAL) is G5.

This sequence belongs to the TRAFAC class translation factor GTPase superfamily. Classic translation factor GTPase family. EF-Tu/EF-1A subfamily.

The protein resides in the plastid. The protein localises to the cyanelle. It carries out the reaction GTP + H2O = GDP + phosphate + H(+). GTP hydrolase that promotes the GTP-dependent binding of aminoacyl-tRNA to the A-site of ribosomes during protein biosynthesis. The sequence is that of Elongation factor Tu, cyanelle (tufA) from Cyanophora paradoxa.